We begin with the raw amino-acid sequence, 221 residues long: HTH-type transcriptional regulator McbR (221 aa).

The HTH gntR-type domain maps to 10–77 (VSLTLQVEND…PAQAFTVPEV (68 aa)). The H-T-H motif DNA-binding region spans 37–56 (TKNLAEQLGMSITPVREALL).

Its function is as follows. Important for biofilm formation. Represses expression of McbA by binding to its promoter region, which prevents colanic acid overproduction and mucoidy. The protein is HTH-type transcriptional regulator McbR (mcbR) of Escherichia coli (strain K12).